A 73-amino-acid chain; its full sequence is Potassium channel toxin alpha-KTx 27.4 (73 aa).

An N-terminal signal peptide occupies residues 1 to 26 (MKFLFLTLVLLYFTAILVFIVFPSYA).

Belongs to the short scorpion toxin superfamily. Potassium channel inhibitor family. Alpha-KTx 27 subfamily. In terms of processing, contains 4 disulfide bonds. In terms of tissue distribution, expressed by the venom gland.

It localises to the secreted. This is Potassium channel toxin alpha-KTx 27.4 from Mesobuthus gibbosus (Mediterranean checkered scorpion).